The chain runs to 579 residues: MLSRSDLLTLLTINFIVVTKGAERISEVSARFTLDAMPGKQMAIDADLNAGLINQAQAQTRRKDVASEADFYGAMDGASKFVRGDAIAGMMILAINLIGGVCIGIFKYNLSADAAFQQYVLMTIGDGLVAQIPSLLLSTAAAIIVTRVSDNGDIAHDVRNQLLASPSVLYTATGIMFVLAVVPGMPHLPFLLFSALLGFTGWRMSKQPLAAEAEEKSLETLTRTITETSEQQVSWETIPLIEPISLSLGYKLVALVDKAQGNPLTQRIRGVRQVISDGNGVLLPEIRIRENFRLKPSQYAIFINGIKADEADIPADKLMALPSSETYGEIDGVQGNDPAYGMPVTWIQAAQKAKALNMGYQVIDSASVIATHVNKIVRSYIPDLFNYDDITQLHNRLSSTAPRLAEDLSAALNYSQLLKVYRALLTEGVSLRDIVTIATVLVASSTVTKDHILLAADVRLALRRSITHPFVRKQELTVYTLNNELENLLTNVVNQAQQGGKVMLDSVPVDPNMLNQFQSTMPQVKEQMKAAGKDPVLLVPPQLRPLLARYARLFAPGLHVLSYNEVPDELELKIMGALM.

The next 3 membrane-spanning stretches (helical) occupy residues 86–106, 124–144, and 177–197; these read AIAGMMILAINLIGGVCIGIF, IGDGLVAQIPSLLLSTAAAII, and FVLAVVPGMPHLPFLLFSALL.

The protein belongs to the FHIPEP (flagella/HR/invasion proteins export pore) family.

It is found in the cell inner membrane. In Escherichia coli (strain K12), this protein is Putative truncated flagellar export/assembly protein LfhA.